Here is a 282-residue protein sequence, read N- to C-terminus: Sulfur carrier protein FdhD (282 aa).

Residue Cys-126 is the Cysteine persulfide intermediate of the active site. Position 265–270 (265–270 (FVRNNR)) interacts with Mo-bis(molybdopterin guanine dinucleotide).

Belongs to the FdhD family.

Its subcellular location is the cytoplasm. Required for formate dehydrogenase (FDH) activity. Acts as a sulfur carrier protein that transfers sulfur from IscS to the molybdenum cofactor prior to its insertion into FDH. This Thermoplasma acidophilum (strain ATCC 25905 / DSM 1728 / JCM 9062 / NBRC 15155 / AMRC-C165) protein is Sulfur carrier protein FdhD.